The following is a 215-amino-acid chain: Probable transaldolase (215 aa).

The active-site Schiff-base intermediate with substrate is the Lys83.

The protein belongs to the transaldolase family. Type 3B subfamily.

It is found in the cytoplasm. It catalyses the reaction D-sedoheptulose 7-phosphate + D-glyceraldehyde 3-phosphate = D-erythrose 4-phosphate + beta-D-fructose 6-phosphate. Its pathway is carbohydrate degradation; pentose phosphate pathway; D-glyceraldehyde 3-phosphate and beta-D-fructose 6-phosphate from D-ribose 5-phosphate and D-xylulose 5-phosphate (non-oxidative stage): step 2/3. Functionally, transaldolase is important for the balance of metabolites in the pentose-phosphate pathway. The chain is Probable transaldolase from Methanococcus maripaludis (strain C5 / ATCC BAA-1333).